A 238-amino-acid polypeptide reads, in one-letter code: DNA repair protein RecO (238 aa).

The protein belongs to the RecO family.

Functionally, involved in DNA repair and RecF pathway recombination. The sequence is that of DNA repair protein RecO from Anaplasma marginale (strain Florida).